The sequence spans 349 residues: Twinfilin-2-A (349 aa).

2 consecutive ADF-H domains span residues 4–139 (QTGI…KHVS) and 177–313 (GLSF…DEVH). A disordered region spans residues 321-349 (QAFAKPKGPAGKRGQKRLIKGPGENGEDS).

It belongs to the actin-binding proteins ADF family. Twinfilin subfamily. Interacts with G-actin; ADP-actin form and capping protein (CP).

It localises to the cytoplasm. The protein resides in the cytoskeleton. The protein localises to the perinuclear region. Its function is as follows. Actin-binding protein involved in motile and morphological processes. Inhibits actin polymerization, likely by sequestering G-actin. This Xenopus laevis (African clawed frog) protein is Twinfilin-2-A (twf2-a).